Here is a 141-residue protein sequence, read N- to C-terminus: Perlwapin-like protein (141 aa).

A signal peptide spans 1–19; it reads MNVYFILFLGVFAFIEVNC. The WAP domain occupies 23–71; it reads KSKSLGTCPKLDVSTVCVVDYKFNCLFQKQCPSGYRCCTYGCNRRCAAV. Intrachain disulfides connect C30–C60, C39–C64, C47–C59, C53–C68, C81–C105, and C92–C104.

As to expression, component of the organic matrix of calcified shell layers like nacre and prisms.

It is found in the secreted. This chain is Perlwapin-like protein, found in Mytilus galloprovincialis (Mediterranean mussel).